We begin with the raw amino-acid sequence, 341 residues long: Dihydroorotate dehydrogenase (quinone) (341 aa).

FMN contacts are provided by residues 62-66 and T86; that span reads AGMDK. Position 66 (K66) interacts with substrate. 111-115 lines the substrate pocket; sequence NRMGF. N139 and N172 together coordinate FMN. N172 contributes to the substrate binding site. Catalysis depends on S175, which acts as the Nucleophile. N177 lines the substrate pocket. 2 residues coordinate FMN: K217 and T245. 246 to 247 contacts substrate; the sequence is NT. FMN-binding positions include G268, G297, and 318–319; that span reads YS.

The protein belongs to the dihydroorotate dehydrogenase family. Type 2 subfamily. As to quaternary structure, monomer. It depends on FMN as a cofactor.

It is found in the cell membrane. The enzyme catalyses (S)-dihydroorotate + a quinone = orotate + a quinol. Its pathway is pyrimidine metabolism; UMP biosynthesis via de novo pathway; orotate from (S)-dihydroorotate (quinone route): step 1/1. In terms of biological role, catalyzes the conversion of dihydroorotate to orotate with quinone as electron acceptor. This chain is Dihydroorotate dehydrogenase (quinone), found in Shewanella loihica (strain ATCC BAA-1088 / PV-4).